The primary structure comprises 185 residues: Threonylcarbamoyl-AMP synthase (185 aa).

Residues 4 to 185 form the YrdC-like domain; the sequence is SWRVQQAAQN…IATGQVMRAG (182 aa).

Belongs to the SUA5 family. TsaC subfamily.

It localises to the cytoplasm. It carries out the reaction L-threonine + hydrogencarbonate + ATP = L-threonylcarbamoyladenylate + diphosphate + H2O. In terms of biological role, required for the formation of a threonylcarbamoyl group on adenosine at position 37 (t(6)A37) in tRNAs that read codons beginning with adenine. Catalyzes the conversion of L-threonine, HCO(3)(-)/CO(2) and ATP to give threonylcarbamoyl-AMP (TC-AMP) as the acyladenylate intermediate, with the release of diphosphate. The chain is Threonylcarbamoyl-AMP synthase from Pseudomonas syringae pv. tomato (strain ATCC BAA-871 / DC3000).